The following is a 124-amino-acid chain: Ribosome-binding factor A (124 aa).

This sequence belongs to the RbfA family. In terms of assembly, monomer. Binds 30S ribosomal subunits, but not 50S ribosomal subunits or 70S ribosomes.

It is found in the cytoplasm. One of several proteins that assist in the late maturation steps of the functional core of the 30S ribosomal subunit. Associates with free 30S ribosomal subunits (but not with 30S subunits that are part of 70S ribosomes or polysomes). Required for efficient processing of 16S rRNA. May interact with the 5'-terminal helix region of 16S rRNA. This chain is Ribosome-binding factor A, found in Sorangium cellulosum (strain So ce56) (Polyangium cellulosum (strain So ce56)).